Here is a 131-residue protein sequence, read N- to C-terminus: Large ribosomal subunit protein bL19 (131 aa).

Residues 107 to 131 form a disordered region; it reads GKSARIAERAERGSDKGKAAPAAAE. Residues 111 to 124 are compositionally biased toward basic and acidic residues; that stretch reads RIAERAERGSDKGK.

It belongs to the bacterial ribosomal protein bL19 family.

Functionally, this protein is located at the 30S-50S ribosomal subunit interface and may play a role in the structure and function of the aminoacyl-tRNA binding site. The polypeptide is Large ribosomal subunit protein bL19 (Methylobacterium sp. (strain 4-46)).